Reading from the N-terminus, the 1839-residue chain is Nuclear pore complex protein DDB_G0274915 (1839 aa).

Composition is skewed to polar residues over residues 1–27 and 35–54; these read MNGRIRQNQTAYNPYSTSGRNNRNTIN and NGSLLMNGSSSPPNNQQTNK. Disordered regions lie at residues 1 to 54, 78 to 150, 325 to 367, 480 to 568, 589 to 636, 657 to 705, 739 to 810, 818 to 837, 846 to 1106, and 1129 to 1839; these read MNGR…QTNK, DESS…ISDD, KQFD…PNAD, PLNK…FSTT, TTIA…GGGV, VSTS…DVPG, TTTT…DSKT, PTTEGLFSKPTTSLTSSSLF, TTPS…FSSN, and TTAT…AKKK. A compositionally biased stretch (low complexity) spans 80–90; it reads SSSSSSSSSSS. The span at 91 to 101 shows a compositional bias: polar residues; it reads YDDGNNIPQKG. Low complexity-rich tracts occupy residues 102–148 and 329–343; these read SSTT…INIS and DNNNSNINDNQSIYN. Residues 344–354 are compositionally biased toward polar residues; sequence RQSIYSPNSKI. Low complexity-rich tracts occupy residues 495-568 and 589-607; these read TYAT…FSTT and TTIATSSPSTSTSTSSSSS. A compositionally biased stretch (polar residues) spans 616–628; the sequence is MFTSDSNKSNLFS. 2 stretches are compositionally biased toward low complexity: residues 658–671 and 739–760; these read STSTSSSTSTSKSS and TTTTASSSSSSSLFSSPPTTDK. Residues 761–773 show a composition bias toward basic and acidic residues; sequence SSADKSSADKSST. Composition is skewed to low complexity over residues 774–803, 827–837, and 846–871; these read DKSTSPVTTSIPSFTSSSTSTSLFGPTTTT, PTTSLTSSSLF, and TTPSIFGDASKSSTSTSLFGSSNTTT. Composition is skewed to acidic residues over residues 896 to 923 and 944 to 958; these read ESDEEDEENEGDEGDEEGDENGELEAEE and LEAEEEFYVPPDSDE. 2 stretches are compositionally biased toward low complexity: residues 1005 to 1021 and 1046 to 1060; these read GSSLFSGGSLLTSSFLT and SSSSSTSSNIIIPTT. The span at 1061–1070 shows a compositional bias: basic and acidic residues; sequence SKKEKIDDKP. Residues 1071–1092 show a composition bias toward low complexity; sequence STTTTTTTTSLFGSTTTSGLFS. Residues 1093-1106 are compositionally biased toward polar residues; the sequence is NPSTTSTGSLFSSN. Composition is skewed to low complexity over residues 1129 to 1242 and 1250 to 1292; these read TTAT…FGST and ATTT…GLFG. Positions 1293–1310 are enriched in polar residues; sequence ASSSTTPSTGLFGSATTP. Low complexity-rich tracts occupy residues 1311 to 1384 and 1397 to 1498; these read STGL…TTPP and LFGT…TTAT. Polar residues predominate over residues 1507-1521; that stretch reads TAPSTGLFGSTTATN. The span at 1522–1673 shows a compositional bias: low complexity; sequence PSTGLFGSTT…SSTPFGASPF (152 aa). Over residues 1676–1708 the composition is skewed to polar residues; the sequence is PTSTSSPPFGAPTSASSTPFGAPQISTSSSTNL. The segment covering 1712 to 1810 has biased composition (low complexity); sequence ASSSTAAPSF…PFGSTPSTAP (99 aa).

This chain is Nuclear pore complex protein DDB_G0274915, found in Dictyostelium discoideum (Social amoeba).